The sequence spans 641 residues: Packaging protein UL32 homolog (641 aa).

Positions 101, 104, 181, 187, 467, 470, 540, and 547 each coordinate Zn(2+). Zinc finger stretches follow at residues 101-187 and 467-547; these read CLVC…LHGC and CLLC…DPMC.

It belongs to the herpesviridae UL32 protein family.

It localises to the host cytoplasm. It is found in the host nucleus. Plays a role in efficient localization of neo-synthesized capsids to nuclear replication compartments, thereby controlling cleavage and packaging of virus genomic DNA. In Gallus gallus (Chicken), this protein is Packaging protein UL32 homolog (MDV046).